A 111-amino-acid chain; its full sequence is Glucosamine 6-phosphate N-acetyltransferase (111 aa).

An N-acetyltransferase domain is found at 1–111 (MKKDFHSTYY…MKKYASHSII (111 aa)). Substrate contacts are provided by residues 33 to 36 (KFLR) and 45 to 47 (EEV). Acetyl-CoA contacts are provided by residues 47–49 (VIV) and 55–60 (RKAIGK). Residues 76-77 (YK) and aspartate 81 contribute to the substrate site. Residue 90–92 (YEK) participates in acetyl-CoA binding.

Belongs to the acetyltransferase family. GNA1 subfamily.

The enzyme catalyses D-glucosamine 6-phosphate + acetyl-CoA = N-acetyl-D-glucosamine 6-phosphate + CoA + H(+). It participates in nucleotide-sugar biosynthesis; UDP-N-acetyl-alpha-D-glucosamine biosynthesis; N-acetyl-alpha-D-glucosamine 1-phosphate from alpha-D-glucosamine 6-phosphate (route I): step 1/2. This chain is Glucosamine 6-phosphate N-acetyltransferase (gna1), found in Schizosaccharomyces pombe (strain 972 / ATCC 24843) (Fission yeast).